The chain runs to 248 residues: 2,3-bisphosphoglycerate-dependent phosphoglycerate mutase (248 aa).

Substrate is bound by residues 8–15 (RHGESTWN), 21–22 (TG), Arg60, 87–90 (ERHY), Lys98, 114–115 (RR), and 183–184 (GN). The Tele-phosphohistidine intermediate role is filled by His9. Glu87 functions as the Proton donor/acceptor in the catalytic mechanism.

This sequence belongs to the phosphoglycerate mutase family. BPG-dependent PGAM subfamily. Homodimer.

It catalyses the reaction (2R)-2-phosphoglycerate = (2R)-3-phosphoglycerate. The protein operates within carbohydrate degradation; glycolysis; pyruvate from D-glyceraldehyde 3-phosphate: step 3/5. Its function is as follows. Catalyzes the interconversion of 2-phosphoglycerate and 3-phosphoglycerate. In Ralstonia nicotianae (strain ATCC BAA-1114 / GMI1000) (Ralstonia solanacearum), this protein is 2,3-bisphosphoglycerate-dependent phosphoglycerate mutase.